A 372-amino-acid polypeptide reads, in one-letter code: DNA polymerase delta subunit 3 (372 aa).

Disordered stretches follow at residues 156–264 (KKAP…NLDS) and 352–372 (KKNT…FGKK). A compositionally biased stretch (polar residues) spans 160 to 173 (STHSPQLSVPSKTS). Position 163 is a phosphoserine (serine 163). 2 stretches are compositionally biased toward basic and acidic residues: residues 174 to 190 (TIDK…KGKD) and 209 to 239 (APLE…DDLK). Residues 355-365 (TAQSKPQQKSI) are compositionally biased toward polar residues.

Heterotetramer that consist of the pol3, cdc1, cdc27 and cdm1 subunits. Cdc27 interacts with cdc1 and is required for dimerization of the tetramer.

It is found in the nucleus. This Schizosaccharomyces pombe (strain 972 / ATCC 24843) (Fission yeast) protein is DNA polymerase delta subunit 3 (cdc27).